Consider the following 208-residue polypeptide: Large ribosomal subunit protein bL25 (208 aa).

Positions 188–208 (AVETETEEETTTGESPAQPAE) are disordered.

The protein belongs to the bacterial ribosomal protein bL25 family. CTC subfamily. In terms of assembly, part of the 50S ribosomal subunit; part of the 5S rRNA/L5/L18/L25 subcomplex. Contacts the 5S rRNA. Binds to the 5S rRNA independently of L5 and L18.

In terms of biological role, this is one of the proteins that binds to the 5S RNA in the ribosome where it forms part of the central protuberance. This is Large ribosomal subunit protein bL25 from Moorella thermoacetica (strain ATCC 39073 / JCM 9320).